The sequence spans 135 residues: ATP synthase epsilon chain, chloroplastic (135 aa).

The protein belongs to the ATPase epsilon chain family. F-type ATPases have 2 components, CF(1) - the catalytic core - and CF(0) - the membrane proton channel. CF(1) has five subunits: alpha(3), beta(3), gamma(1), delta(1), epsilon(1). CF(0) has three main subunits: a, b and c.

The protein localises to the plastid. It localises to the chloroplast thylakoid membrane. Produces ATP from ADP in the presence of a proton gradient across the membrane. The polypeptide is ATP synthase epsilon chain, chloroplastic (Marchantia polymorpha (Common liverwort)).